Consider the following 224-residue polypeptide: DNA mismatch repair protein MutH (224 aa).

The protein belongs to the MutH family.

The protein resides in the cytoplasm. In terms of biological role, sequence-specific endonuclease that cleaves unmethylated GATC sequences. It is involved in DNA mismatch repair. This chain is DNA mismatch repair protein MutH, found in Histophilus somni (strain 2336) (Haemophilus somnus).